A 1029-amino-acid chain; its full sequence is uncharacterized protein (1029 aa).

Residues 1–23 (MREWCMLRESRTNTPRRAAERGK) are compositionally biased toward basic and acidic residues. Positions 1–31 (MREWCMLRESRTNTPRRAAERGKRPGGSSVR) are disordered. The Guanylate cyclase domain maps to 39-168 (TALCYDLVGS…AALAMAARLQ (130 aa)). 261–268 (GDAGIGKS) contributes to the ATP binding site.

This is an uncharacterized protein from Rhizobium meliloti (strain 1021) (Ensifer meliloti).